Consider the following 156-residue polypeptide: MTMTLDAARGGEMVESPFLAQLVAVIRAEDSHGLWDDKTNSEILREFIVTAEERRSMPIIGDPDPELIWRMTKFYDAIGLLVEKRTGCMASQMQKMHHEGFGRVVLIAGKLVVVSKHLRDVHRFGFETWAKLAEAGEKLVESAVATINEFPEAARA.

It belongs to the UPF0460 family.

This is UPF0460 protein in nifX 3'region from Rhodobacter capsulatus (Rhodopseudomonas capsulata).